A 233-amino-acid chain; its full sequence is Lipoprotein-releasing system ATP-binding protein LolD (233 aa).

Residues 6–233 (LQCDNLCKRY…TAELSLMGAE (228 aa)) form the ABC transporter domain. 42 to 49 (GSSGSGKS) contributes to the ATP binding site.

This sequence belongs to the ABC transporter superfamily. Lipoprotein translocase (TC 3.A.1.125) family. As to quaternary structure, the complex is composed of two ATP-binding proteins (LolD) and two transmembrane proteins (LolC and LolE).

It localises to the cell inner membrane. Functionally, part of the ABC transporter complex LolCDE involved in the translocation of mature outer membrane-directed lipoproteins, from the inner membrane to the periplasmic chaperone, LolA. Responsible for the formation of the LolA-lipoprotein complex in an ATP-dependent manner. In Shigella flexneri, this protein is Lipoprotein-releasing system ATP-binding protein LolD.